Here is a 256-residue protein sequence, read N- to C-terminus: Hydroxyacylglutathione hydrolase (256 aa).

Residues His-57, His-59, Asp-61, His-62, His-115, Asp-134, and His-172 each contribute to the Zn(2+) site.

It belongs to the metallo-beta-lactamase superfamily. Glyoxalase II family. As to quaternary structure, monomer. Requires Zn(2+) as cofactor.

The catalysed reaction is an S-(2-hydroxyacyl)glutathione + H2O = a 2-hydroxy carboxylate + glutathione + H(+). The protein operates within secondary metabolite metabolism; methylglyoxal degradation; (R)-lactate from methylglyoxal: step 2/2. Its function is as follows. Thiolesterase that catalyzes the hydrolysis of S-D-lactoyl-glutathione to form glutathione and D-lactic acid. The polypeptide is Hydroxyacylglutathione hydrolase (Jannaschia sp. (strain CCS1)).